The following is an 882-amino-acid chain: Cadherin-1 (882 aa).

An N-terminal signal peptide occupies residues 1 to 23 (MGPWSRSLSALCCCCRCNPWLCR). Residues 24–154 (EPEPCIPGFG…PHHGLRRQKR (131 aa)) constitute a propeptide that is removed on maturation. Residues 117-137 (EVSAHHHHHHSHHDSPSGTQT) are disordered. 5 consecutive Cadherin domains span residues 154-262 (RDWV…KPQF), 263-375 (TQEV…APRF), 376-486 (NPTT…APIF), 487-595 (VPPQ…GPVP), and 594-702 (VPEP…RPAE). The Extracellular portion of the chain corresponds to 155–709 (DWVIPPISCP…PAEAGLQVPA (555 aa)). Residue Ser280 is glycosylated (O-linked (Man...) serine). Thr285, Thr358, Thr470, Thr472, and Thr509 each carry an O-linked (Man...) threonine glycan. Asn558 carries N-linked (GlcNAc...) asparagine glycosylation. Thr576, Thr578, and Thr580 each carry an O-linked (Man...) threonine glycan. A glycan (N-linked (GlcNAc...) asparagine) is linked at Asn637. Residues 710–730 (ILGILGGILAFLILILLLLLL) traverse the membrane as a helical segment. Residues 731-882 (VRRRRVVKEP…ADMYGGGEDD (152 aa)) lie on the Cytoplasmic side of the membrane. The disordered stretch occupies residues 747–767 (DTRDNVYYYDEEGGGEEDQDF). Tyr753, Tyr754, and Tyr755 each carry phosphotyrosine; by SRC. The segment covering 755–767 (YDEEGGGEEDQDF) has biased composition (acidic residues). The required for binding CTNND1 and PSEN1 stretch occupies residues 758-769 (EGGGEEDQDFDL). Residues Ser770, Ser793, Ser838, Ser840, and Ser846 each carry the phosphoserine modification. A required for binding alpha, beta and gamma catenins region spans residues 811–882 (IDENLKAADS…ADMYGGGEDD (72 aa)).

In terms of assembly, homodimer; disulfide-linked. Component of an E-cadherin/ catenin adhesion complex composed of at least E-cadherin/CDH1, beta-catenin/CTNNB1 or gamma-catenin/JUP, and potentially alpha-catenin/CTNNA1; the complex is located to adherens junctions. Found in a complex composed of CDH1, RAP1A and PKP3; PKP3 acts as a scaffold protein within the complex, the complex is required for CDH1 localization to mature desmosome cell junctions. Interacts with the TRPV4 and CTNNB1 complex. Interacts with CTNND1. The stable association of CTNNA1 is controversial as CTNNA1 was shown not to bind to F-actin when assembled in the complex. Alternatively, the CTNNA1-containing complex may be linked to F-actin by other proteins such as LIMA1. Interaction with PSEN1, cleaves CDH1 resulting in the disassociation of cadherin-based adherens junctions (CAJs). Interacts with AJAP1 and DLGAP5. Interacts with TBC1D2. Interacts with CAV1. Interacts with PIP5K1C. Interacts with RAB8B. Interacts with DDR1; this stabilizes CDH1 at the cell surface and inhibits its internalization. Interacts with RAPGEF2. Interacts with KLRG1. Forms a ternary complex composed of ADAM10, CADH1 and EPHA4; within the complex, CADH1 is cleaved by ADAM10 which disrupts adherens junctions. Interacts with SPEF1. Interacts with CTNNB1 and PKP2. Interacts with AMOTL2; the interaction may facilitate binding of radial actin fibers to cell junction complexes. Interacts with DSG3; the interaction is required for CDH1 localization to developing adherens junctions. In terms of processing, during apoptosis or with calcium influx, cleaved by a membrane-bound metalloproteinase (ADAM10), PS1/gamma-secretase and caspase-3. Processing by the metalloproteinase, induced by calcium influx, causes disruption of cell-cell adhesion and the subsequent release of beta-catenin into the cytoplasm. The residual membrane-tethered cleavage product is rapidly degraded via an intracellular proteolytic pathway. Cleavage by caspase-3 releases the cytoplasmic tail resulting in disintegration of the actin microfilament system. The gamma-secretase-mediated cleavage promotes disassembly of adherens junctions. During development of the cochlear organ of Corti, cleavage by ADAM10 at adherens junctions promotes pillar cell separation. Post-translationally, N-glycosylation at Asn-637 is essential for expression, folding and trafficking. Addition of bisecting N-acetylglucosamine by MGAT3 modulates its cell membrane location. Ubiquitinated by a SCF complex containing SKP2, which requires prior phosphorylation by CK1/CSNK1A1. Ubiquitinated by CBLL1/HAKAI, requires prior phosphorylation at Tyr-754. In terms of processing, O-glycosylated. O-manosylated by TMTC1, TMTC2, TMTC3 or TMTC4. Thr-285 and Thr-509 are O-mannosylated by TMTC2 or TMTC4 but not TMTC1 or TMTC3.

It is found in the cell junction. Its subcellular location is the adherens junction. It localises to the cell membrane. The protein resides in the endosome. The protein localises to the golgi apparatus. It is found in the trans-Golgi network. Its subcellular location is the cytoplasm. It localises to the desmosome. Functionally, cadherins are calcium-dependent cell adhesion proteins. They preferentially interact with themselves in a homophilic manner in connecting cells; cadherins may thus contribute to the sorting of heterogeneous cell types. CDH1 is involved in mechanisms regulating cell-cell adhesions, mobility and proliferation of epithelial cells. Promotes organization of radial actin fiber structure and cellular response to contractile forces, via its interaction with AMOTL2 which facilitates anchoring of radial actin fibers to CDH1 junction complexes at the cell membrane. Plays a role in the early stages of desmosome cell-cell junction formation via facilitating the recruitment of DSG2 and DSP to desmosome plaques. Has a potent invasive suppressor role. It is a ligand for integrin alpha-E/beta-7. E-Cad/CTF2 promotes non-amyloidogenic degradation of Abeta precursors. Has a strong inhibitory effect on APP C99 and C83 production. This chain is Cadherin-1 (CDH1), found in Bos taurus (Bovine).